We begin with the raw amino-acid sequence, 442 residues long: UDP-N-acetylmuramate--L-alanine ligase (442 aa).

Glycine 109–serine 115 is an ATP binding site.

The protein belongs to the MurCDEF family.

The protein resides in the cytoplasm. The enzyme catalyses UDP-N-acetyl-alpha-D-muramate + L-alanine + ATP = UDP-N-acetyl-alpha-D-muramoyl-L-alanine + ADP + phosphate + H(+). It functions in the pathway cell wall biogenesis; peptidoglycan biosynthesis. Cell wall formation. This Streptococcus pyogenes serotype M28 (strain MGAS6180) protein is UDP-N-acetylmuramate--L-alanine ligase.